The following is a 331-amino-acid chain: Phosphate acyltransferase (331 aa).

This sequence belongs to the PlsX family. Homodimer. Probably interacts with PlsY.

It localises to the cytoplasm. The catalysed reaction is a fatty acyl-[ACP] + phosphate = an acyl phosphate + holo-[ACP]. It functions in the pathway lipid metabolism; phospholipid metabolism. Its function is as follows. Catalyzes the reversible formation of acyl-phosphate (acyl-PO(4)) from acyl-[acyl-carrier-protein] (acyl-ACP). This enzyme utilizes acyl-ACP as fatty acyl donor, but not acyl-CoA. This chain is Phosphate acyltransferase, found in Lactococcus lactis subsp. lactis (strain IL1403) (Streptococcus lactis).